The chain runs to 123 residues: Large ribosomal subunit protein uL14 (123 aa).

Belongs to the universal ribosomal protein uL14 family. In terms of assembly, part of the 50S ribosomal subunit. Forms a cluster with proteins L3 and L19. In the 70S ribosome, L14 and L19 interact and together make contacts with the 16S rRNA in bridges B5 and B8.

In terms of biological role, binds to 23S rRNA. Forms part of two intersubunit bridges in the 70S ribosome. The sequence is that of Large ribosomal subunit protein uL14 from Zymomonas mobilis subsp. mobilis (strain ATCC 31821 / ZM4 / CP4).